The sequence spans 481 residues: Halobacterial transducer protein 9 (481 aa).

Residues 10 to 81 form the PAS domain; the sequence is SPFTVPLLLN…NKVADTPIDA (72 aa). Residues 208-444 form the Methyl-accepting transducer domain; sequence DVERLEAASQ…EIAAMVDETA (237 aa).

It belongs to the methyl-accepting chemotaxis (MCP) protein family.

It is found in the cytoplasm. Its function is as follows. Potentially involved in chemo- or phototactic signal transduction. This chain is Halobacterial transducer protein 9 (htr9), found in Halobacterium salinarum (strain ATCC 700922 / JCM 11081 / NRC-1) (Halobacterium halobium).